The chain runs to 206 residues: Translation initiation factor IF-3 (206 aa).

It belongs to the IF-3 family. Monomer.

Its subcellular location is the cytoplasm. IF-3 binds to the 30S ribosomal subunit and shifts the equilibrium between 70S ribosomes and their 50S and 30S subunits in favor of the free subunits, thus enhancing the availability of 30S subunits on which protein synthesis initiation begins. The protein is Translation initiation factor IF-3 of Shigella flexneri.